We begin with the raw amino-acid sequence, 142 residues long: Large-conductance mechanosensitive channel (142 aa).

The next 3 membrane-spanning stretches (helical) occupy residues 15-35 (AFVMRGNVVDLAVGVIIGAAF), 38-58 (IVTSLVNDIFMPIIGMIIGNI), and 82-102 (GMFIQEIVNFLIIALCVFVAI).

The protein belongs to the MscL family. As to quaternary structure, homopentamer.

The protein localises to the cell inner membrane. Channel that opens in response to stretch forces in the membrane lipid bilayer. May participate in the regulation of osmotic pressure changes within the cell. This chain is Large-conductance mechanosensitive channel, found in Fusobacterium nucleatum subsp. nucleatum (strain ATCC 25586 / DSM 15643 / BCRC 10681 / CIP 101130 / JCM 8532 / KCTC 2640 / LMG 13131 / VPI 4355).